A 78-amino-acid chain; its full sequence is Magnetosome protein MamL (78 aa).

The first 22 residues, 1–22 (MVRVIGSLVFGGLILLLASSNA), serve as a signal peptide directing secretion. Residues 23-38 (HMVETRFGPLIMLAPH) lie on the Lumenal side of the membrane. Residues 39–59 (FVVLGITFFLGFAIGIVLVFA) traverse the membrane as a helical segment. The Cytoplasmic portion of the chain corresponds to 60–78 (NVMKRRKHKLPGKNIVIKR).

Belongs to the magnetosome MamL family.

It localises to the magnetosome membrane. Functionally, involved in magnetite crystal maturation, but not in magnetosome vesicle tubulation or formation. One of 7 genes (mamLQBIEMO) able to induce magnetosome membrane biogenesis; coexpression of mamLQRBIEMO in a deletion of the 17 gene mamAB operon restores magnetosome vesicle formation but not magnetite biosynthesis. This Magnetospirillum gryphiswaldense (strain DSM 6361 / JCM 21280 / NBRC 15271 / MSR-1) protein is Magnetosome protein MamL.